A 473-amino-acid chain; its full sequence is Photosystem II CP43 reaction center protein (473 aa).

Residues 1–14 (MKTLYSLRRSYPVE) constitute a propeptide that is removed on maturation. Thr-15 is modified (N-acetylthreonine). Residue Thr-15 is modified to Phosphothreonine. Transmembrane regions (helical) follow at residues 69-93 (LFEVAHFVPEKPMYEQGLILLPHLA), 134-155 (LIGPETLEESFPFFGYVWKDKN), 178-200 (KALYFGGLYDTWAPGGGDVRKIT), 255-275 (KPFAWARRAFVWSGEAYLSYS), and 291-312 (WFNNTAYPSEFYGPTGPEASQA). [CaMn4O5] cluster is bound at residue Glu-367. A helical transmembrane segment spans residues 447 to 471 (RARAAAAGFEKGIDRDTEPVLFMNP).

Belongs to the PsbB/PsbC family. PsbC subfamily. PSII is composed of 1 copy each of membrane proteins PsbA, PsbB, PsbC, PsbD, PsbE, PsbF, PsbH, PsbI, PsbJ, PsbK, PsbL, PsbM, PsbT, PsbX, PsbY, PsbZ, Psb30/Ycf12, at least 3 peripheral proteins of the oxygen-evolving complex and a large number of cofactors. It forms dimeric complexes. Requires Binds multiple chlorophylls and provides some of the ligands for the Ca-4Mn-5O cluster of the oxygen-evolving complex. It may also provide a ligand for a Cl- that is required for oxygen evolution. PSII binds additional chlorophylls, carotenoids and specific lipids. as cofactor.

Its subcellular location is the plastid. The protein localises to the chloroplast thylakoid membrane. Functionally, one of the components of the core complex of photosystem II (PSII). It binds chlorophyll and helps catalyze the primary light-induced photochemical processes of PSII. PSII is a light-driven water:plastoquinone oxidoreductase, using light energy to abstract electrons from H(2)O, generating O(2) and a proton gradient subsequently used for ATP formation. This chain is Photosystem II CP43 reaction center protein, found in Zygnema circumcarinatum (Green alga).